A 120-amino-acid polypeptide reads, in one-letter code: Large ribosomal subunit protein uL24 (120 aa).

Belongs to the universal ribosomal protein uL24 family. As to quaternary structure, part of the 50S ribosomal subunit.

One of two assembly initiator proteins, it binds directly to the 5'-end of the 23S rRNA, where it nucleates assembly of the 50S subunit. Its function is as follows. Located at the polypeptide exit tunnel on the outside of the subunit. This Archaeoglobus fulgidus (strain ATCC 49558 / DSM 4304 / JCM 9628 / NBRC 100126 / VC-16) protein is Large ribosomal subunit protein uL24.